We begin with the raw amino-acid sequence, 3411 residues long: Genome polyprotein (3411 aa).

Topologically, residues 1–104 are cytoplasmic; that stretch reads MSGRKAQGKT…LSSRKRRSHD (104 aa). The segment at 38-72 is hydrophobic; homodimerization of capsid protein C; that stretch reads PGPSRGVQGFISFFSFNILTGKKITAHLKRLWKML. A propeptide spans 102-121 (ER anchor for the capsid protein C, removed in mature form by serine protease NS3); sequence SHDVLTVQFLILGMLLMAGG. A helical transmembrane segment spans residues 105-125; the sequence is VLTVQFLILGMLLMAGGVTLV. Over 126 to 244 the chain is Extracellular; sequence RKNRWLLLNV…GERQLQKIER (119 aa). Asparagine 134 and asparagine 150 each carry an N-linked (GlcNAc...) asparagine; by host glycan. Residues 245–265 traverse the membrane as a helical segment; that stretch reads WLVRNPFFAVTALAIAYLVGS. Topologically, residues 266 to 270 are cytoplasmic; that stretch reads NMTQR. The chain crosses the membrane as a helical span at residues 271–285; that stretch reads VVIALLVLAVGPAYS. At 286–730 the chain is on the extracellular side; sequence AHCIGITDRD…TVFGSAFQGL (445 aa). 8 cysteine pairs are disulfide-bonded: cysteine 288–cysteine 315, cysteine 345–cysteine 401, cysteine 345–cysteine 406, cysteine 359–cysteine 390, cysteine 377–cysteine 401, cysteine 377–cysteine 406, cysteine 467–cysteine 568, and cysteine 585–cysteine 615. Residues 383–396 form a fusion peptide region; sequence DRGWGNGCGLFGKG. A helical transmembrane segment spans residues 731–751; that stretch reads FGGLSWITKVIMGAVLIWVGI. Residues 752 to 757 lie on the Extracellular side of the membrane; the sequence is NTRNMT. A helical transmembrane segment spans residues 758-778; sequence MSMSMILVGVIMMFLSLGVGA. At 779 to 1132 the chain is on the extracellular side; sequence DQGCAINFGK…LVRSWVTAGE (354 aa). 6 cysteine pairs are disulfide-bonded: cysteine 782–cysteine 793, cysteine 833–cysteine 921, cysteine 957–cysteine 1002, cysteine 1058–cysteine 1107, cysteine 1069–cysteine 1091, and cysteine 1090–cysteine 1094. N-linked (GlcNAc...) asparagine; by host glycans are attached at residues asparagine 908 and asparagine 986. The helical transmembrane segment at 1133–1153 threads the bilayer; that stretch reads IHAVPFGLVSMMIAMEVVLRK. Over 1154–1201 the chain is Cytoplasmic; it reads RQGPKQMLVGGMVLLGAMLVGQVTLLDLLKLTMAVGLHFHEMNNGGDA. The chain crosses the membrane as a helical span at residues 1202–1222; that stretch reads MYMALIAAFSIRPGLLIGFGL. At 1223–1287 the chain is on the lumenal side; the sequence is RTLWSPRERL…ILPLMALLTP (65 aa). The chain crosses the membrane as a helical span at residues 1288–1308; the sequence is VTMAEVRLATMLLCAVVIIGV. Over 1309-1355 the chain is Cytoplasmic; it reads LHQNSKDTSMQKTIPLVALTLTSYLGLTQPFLGLCAFLATRIFGRRS. Residues 1356 to 1376 traverse the membrane as a helical segment; that stretch reads IPVNEALAAAGLVGVLAGLAF. Residues 1377–1378 lie on the Lumenal side of the membrane; the sequence is QE. The helical transmembrane segment at 1379 to 1399 threads the bilayer; it reads MENFLGPIAVGGILMMLVSVA. The Cytoplasmic portion of the chain corresponds to 1400 to 1456; the sequence is GRVDGLELKKLGEVSWEEEAEISGSSARYDVALSEQGEFKLLSEEKVPWDQVVMTSL. The interacts with and activates NS3 protease stretch occupies residues 1407–1446; it reads LKKLGEVSWEEEAEISGSSARYDVALSEQGEFKLLSEEKV. Positions 1457 to 1477 form an intramembrane region, helical; that stretch reads ALVGAAIHPSALLLVLAGWLF. Residues 1478–2157 are Cytoplasmic-facing; it reads HVKGARRSGD…RNALSMMPEA (680 aa). In terms of domain architecture, Peptidase S7 spans 1485 to 1665; that stretch reads SGDVLWDIPT…EVKEEGKEEL (181 aa). Active-site charge relay system; for serine protease NS3 activity residues include histidine 1537, aspartate 1561, and serine 1622. The 157-residue stretch at 1669-1825 folds into the Helicase ATP-binding domain; sequence PTMLKKGMTT…HSNGEIEDVQ (157 aa). Positions 1673–1676 are important for RNA-binding; that stretch reads KKGM. Residue 1682 to 1689 coordinates ATP; the sequence is YHPGAGKT. The DEAH box motif lies at 1773 to 1776; that stretch reads DEAH. The Helicase C-terminal domain maps to 1820–1997; sequence EIEDVQTDIP…VRGGMVAPLY (178 aa). An N6-acetyllysine; by host modification is found at lysine 1877. A helical transmembrane segment spans residues 2158–2178; it reads MTIVMLFILAGLLTSGMVIFF. Residues 2179 to 2186 are Lumenal-facing; that stretch reads MSPKGISR. The segment at residues 2187–2207 is an intramembrane region (helical); that stretch reads MSMAMGTMAGCGYLMFLGGAK. The Lumenal segment spans residues 2208–2209; the sequence is PT. The chain crosses the membrane as a helical span at residues 2210–2230; sequence HISYIMLIFFVLMVVVIPEPG. Topologically, residues 2231–2241 are cytoplasmic; the sequence is QQRSIQDNQVA. A helical transmembrane segment spans residues 2242-2262; sequence YLIIGILTLVSVVAANELGML. Residues 2263–2293 lie on the Lumenal side of the membrane; it reads ERTKEDLFGKKNLIPSSASPWSWPDLDLKPG. An intramembrane region (helical) is located at residues 2294 to 2314; it reads AAWTVYVGIVTILSPMLHHWI. The Lumenal portion of the chain corresponds to 2315 to 2360; it reads KVEYGNLSLSGIAQSASVLSFMDKGIPFMKMNISVIILLVSGWNSI. Residues 2361–2380 traverse the membrane as a helical segment; the sequence is TVMPLLCGIGCAMLHWTLIL. Residues 2381-2421 are Cytoplasmic-facing; the sequence is PGIKAQQSKLPQRRVFHGVAKNPVVDGNPTVDIEEAPEMPA. A helical membrane pass occupies residues 2422–2442; sequence LYEKKLALYLLLALSLASVAM. Topologically, residues 2443–2445 are lumenal; it reads CRT. The chain crosses the membrane as a helical span at residues 2446-2466; the sequence is PFSLAEGIVLASAALGPLIEG. The Cytoplasmic segment spans residues 2467 to 3411; the sequence is NTSLLWNGPM…DADLQPGELI (945 aa). The 265-residue stretch at 2507 to 2771 folds into the mRNA cap 0-1 NS5-type MT domain; the sequence is GRANGKTLGE…DVILPIGTRS (265 aa). Residue serine 2562 participates in S-adenosyl-L-methionine binding. Phosphoserine is present on serine 2562. The For 2'-O-MTase activity role is filled by lysine 2567. S-adenosyl-L-methionine contacts are provided by glycine 2592, tryptophan 2593, threonine 2610, leucine 2611, aspartate 2637, and isoleucine 2638. The For 2'-O-MTase activity role is filled by aspartate 2652. An S-adenosyl-L-methionine-binding site is contributed by isoleucine 2653. Residues lysine 2688 and glutamate 2724 each act as for 2'-O-MTase activity in the active site. Tyrosine 2726 provides a ligand contact to S-adenosyl-L-methionine. The Nuclear localization signal signature appears at 2878–2911; that stretch reads RKIMKVVNRWLFRHLAREKNPRLCTKEEFIAKVR. Residues glutamate 2945, histidine 2949, cysteine 2954, and cysteine 2957 each contribute to the Zn(2+) site. Positions 3035-3187 constitute a RdRp catalytic domain; sequence GGFYADDTAG…RPIDDRFGMA (153 aa). Zn(2+)-binding residues include histidine 3222, cysteine 3238, and cysteine 3357.

The protein in the N-terminal section; belongs to the class I-like SAM-binding methyltransferase superfamily. mRNA cap 0-1 NS5-type methyltransferase family. Homodimer. Interacts (via N-terminus) with host EXOC1 (via C-terminus); this interaction results in EXOC1 degradation through the proteasome degradation pathway. In terms of assembly, forms heterodimers with envelope protein E in the endoplasmic reticulum and Golgi. As to quaternary structure, homodimer; in the endoplasmic reticulum and Golgi. Interacts with protein prM. Interacts with non-structural protein 1. Homodimer; Homohexamer when secreted. Interacts with envelope protein E. In terms of assembly, interacts (via N-terminus) with serine protease NS3. As to quaternary structure, forms a heterodimer with serine protease NS3. May form homooligomers. Forms a heterodimer with NS2B. Interacts with non-structural protein 2A (via N-terminus). Interacts with NS4B. Interacts with unphosphorylated RNA-directed RNA polymerase NS5; this interaction stimulates RNA-directed RNA polymerase NS5 guanylyltransferase activity. NS3 interacts with host PDCD6IP; this interaction contributes to virion release. In terms of assembly, interacts with serine protease NS3. As to quaternary structure, homodimer. Interacts with host STAT2; this interaction prevents the establishment of cellular antiviral state. Interacts with serine protease NS3. Interacts with host TRIM23; this interaction leads to NS5 ubiquitination. Specific enzymatic cleavages in vivo yield mature proteins. The nascent capsid protein C contains a C-terminal hydrophobic domain that act as a signal sequence for translocation of prM into the lumen of the ER. Mature capsid protein C is cleaved at a site upstream of this hydrophobic domain by NS3. prM is cleaved in post-Golgi vesicles by a host furin, releasing the mature small envelope protein M, and peptide pr. Non-structural protein 2A-alpha, a C-terminally truncated form of non-structural protein 2A, results from partial cleavage by NS3. Specific enzymatic cleavages in vivo yield mature proteins peptide 2K acts as a signal sequence and is removed from the N-terminus of NS4B by the host signal peptidase in the ER lumen. Signal cleavage at the 2K-4B site requires a prior NS3 protease-mediated cleavage at the 4A-2K site. In terms of processing, cleaved in post-Golgi vesicles by a host furin, releasing the mature small envelope protein M, and peptide pr. This cleavage is incomplete as up to 30% of viral particles still carry uncleaved prM. Post-translationally, N-glycosylated. N-glycosylated. The excreted form is glycosylated and this is required for efficient secretion of the protein from infected cells. In terms of processing, polyubiquitinated; ubiquitination is probably mediated by host TRIM23 and is prerequisite for NS5-STAT2 interaction. NS5 is not ISGylated or sumoylated. Post-translationally, acetylated by host KAT5. Acetylation modulates NS3 RNA-binding and unwinding activities and plays an important positive role for viral replication. Phosphorylated on serines residues. This phosphorylation may trigger NS5 nuclear localization.

It localises to the virion. Its subcellular location is the host nucleus. It is found in the host cytoplasm. The protein localises to the host perinuclear region. The protein resides in the secreted. It localises to the virion membrane. Its subcellular location is the host endoplasmic reticulum membrane. It carries out the reaction Selective hydrolysis of -Xaa-Xaa-|-Yaa- bonds in which each of the Xaa can be either Arg or Lys and Yaa can be either Ser or Ala.. It catalyses the reaction RNA(n) + a ribonucleoside 5'-triphosphate = RNA(n+1) + diphosphate. The catalysed reaction is a ribonucleoside 5'-triphosphate + H2O = a ribonucleoside 5'-diphosphate + phosphate + H(+). The enzyme catalyses ATP + H2O = ADP + phosphate + H(+). It carries out the reaction a 5'-end (5'-triphosphoguanosine)-ribonucleoside in mRNA + S-adenosyl-L-methionine = a 5'-end (N(7)-methyl 5'-triphosphoguanosine)-ribonucleoside in mRNA + S-adenosyl-L-homocysteine. It catalyses the reaction a 5'-end (N(7)-methyl 5'-triphosphoguanosine)-ribonucleoside in mRNA + S-adenosyl-L-methionine = a 5'-end (N(7)-methyl 5'-triphosphoguanosine)-(2'-O-methyl-ribonucleoside) in mRNA + S-adenosyl-L-homocysteine + H(+). In terms of biological role, plays a role in virus budding by binding to the cell membrane and gathering the viral RNA into a nucleocapsid that forms the core of a mature virus particle. During virus entry, may induce genome penetration into the host cytoplasm after hemifusion induced by the surface proteins. Can migrate to the cell nucleus where it modulates host functions. Its function is as follows. Inhibits RNA silencing by interfering with host Dicer. Functionally, prevents premature fusion activity of envelope proteins in trans-Golgi by binding to envelope protein E at pH6.0. After virion release in extracellular space, gets dissociated from E dimers. Acts as a chaperone for envelope protein E during intracellular virion assembly by masking and inactivating envelope protein E fusion peptide. prM is the only viral peptide matured by host furin in the trans-Golgi network probably to avoid catastrophic activation of the viral fusion activity in acidic Golgi compartment prior to virion release. prM-E cleavage is inefficient, and many virions are only partially matured. These uncleaved prM would play a role in immune evasion. In terms of biological role, may play a role in virus budding. Exerts cytotoxic effects by activating a mitochondrial apoptotic pathway through M ectodomain. May display a viroporin activity. Its function is as follows. Binds to host cell surface receptor and mediates fusion between viral and cellular membranes. Envelope protein is synthesized in the endoplasmic reticulum in the form of heterodimer with protein prM. They play a role in virion budding in the ER, and the newly formed immature particle is covered with 60 spikes composed of heterodimer between precursor prM and envelope protein E. The virion is transported to the Golgi apparatus where the low pH causes dissociation of PrM-E heterodimers and formation of E homodimers. prM-E cleavage is inefficient, and many virions are only partially matured. These uncleaved prM would play a role in immune evasion. Functionally, involved in immune evasion, pathogenesis and viral replication. Once cleaved off the polyprotein, is targeted to three destinations: the viral replication cycle, the plasma membrane and the extracellular compartment. Essential for viral replication. Required for formation of the replication complex and recruitment of other non-structural proteins to the ER-derived membrane structures. Excreted as a hexameric lipoparticle that plays a role against host immune response. Antagonizing the complement function. Binds to the host macrophages and dendritic cells. Inhibits signal transduction originating from Toll-like receptor 3 (TLR3). Component of the viral RNA replication complex that functions in virion assembly and antagonizes the host immune response. In terms of biological role, required cofactor for the serine protease function of NS3. May have membrane-destabilizing activity and form viroporins. Its function is as follows. Displays three enzymatic activities: serine protease, NTPase and RNA helicase. NS3 serine protease, in association with NS2B, performs its autocleavage and cleaves the polyprotein at dibasic sites in the cytoplasm: C-prM, NS2A-NS2B, NS2B-NS3, NS3-NS4A, NS4A-2K and NS4B-NS5. NS3 RNA helicase binds RNA and unwinds dsRNA in the 3' to 5' direction. Also plays a role in virus assembly. Functionally, regulates the ATPase activity of the NS3 helicase activity. NS4A allows NS3 helicase to conserve energy during unwinding. Functions as a signal peptide for NS4B and is required for the interferon antagonism activity of the latter. In terms of biological role, induces the formation of ER-derived membrane vesicles where the viral replication takes place. Inhibits interferon (IFN)-induced host STAT1 phosphorylation and nuclear translocation, thereby preventing the establishment of cellular antiviral state by blocking the IFN-alpha/beta pathway. Its function is as follows. Replicates the viral (+) and (-) RNA genome, and performs the capping of genomes in the cytoplasm. NS5 methylates viral RNA cap at guanine N-7 and ribose 2'-O positions. Besides its role in RNA genome replication, also prevents the establishment of cellular antiviral state by blocking the interferon-alpha/beta (IFN-alpha/beta) signaling pathway. IFN-I induces binding of NS5 to host IFN-activated transcription factor STAT2, preventing its transcriptional activity. Host TRIM23 is the E3 ligase that interacts with and polyubiquitinates NS5 to promote its binding to STAT2 and trigger IFN-I signaling inhibition. The polypeptide is Genome polyprotein (Yellow fever virus (isolate Ivory Coast/85-82H/1982) (YFV)).